The chain runs to 264 residues: Transmembrane protein 41A (264 aa).

Residues Met1 to Ala17 form the signal peptide. The next 5 membrane-spanning stretches (helical) occupy residues Ala67–Gly87, Gly100–Leu122, Leu153–Leu173, Ala175–Pro195, and Trp219–Ile239. A VTT domain region spans residues Gly96–Leu207.

Belongs to the TMEM41 family.

It is found in the membrane. This chain is Transmembrane protein 41A (Tmem41a), found in Mus musculus (Mouse).